Here is a 559-residue protein sequence, read N- to C-terminus: Berberine bridge enzyme-like A (559 aa).

A signal peptide spans 1–21; sequence MFPLIILISFSLASLSETATG. Residues Asn25 and Asn37 are each glycosylated (N-linked (GlcNAc...) asparagine). Cys29 and Cys86 are joined by a disulfide. The FAD-binding PCMH-type domain occupies 64–240; that stretch reads FMPKPTFIIL…YAWKIRLLKV (177 aa). His101 carries the pros-8alpha-FAD histidine modification. N-linked (GlcNAc...) asparagine glycosylation is found at Asn321, Asn355, and Asn494.

This sequence belongs to the oxygen-dependent FAD-linked oxidoreductase family. FAD is required as a cofactor. In terms of tissue distribution, mostly expressed in roots.

It localises to the vacuole. Its pathway is alkaloid biosynthesis; nicotine biosynthesis. Functionally, involved in the biosynthesis of pyridine alkaloid natural products, leading mainly to the production of anabasine, anatabine, nicotine and nornicotine, effective deterrents against herbivores with antiparasitic and pesticide properties (neurotoxins); nornicotine serves as the precursor in the synthesis of the carcinogen compound N'-nitrosonornicotine (NNN). Catalyzes a late oxidation step subsequent to the pyridine ring condensation reaction in the biosynthesis of alkaloids. The chain is Berberine bridge enzyme-like A from Nicotiana tabacum (Common tobacco).